Here is a 318-residue protein sequence, read N- to C-terminus: Probable tyrosine phosphatase protein N1 (318 aa).

A Tyrosine-protein phosphatase domain is found at 26–292 (IVRLEHHQVI…LILQPGYYVL (267 aa)). Cysteine 233 serves as the catalytic Phosphocysteine intermediate.

It belongs to the protein-tyrosine phosphatase family.

It carries out the reaction O-phospho-L-tyrosyl-[protein] + H2O = L-tyrosyl-[protein] + phosphate. The sequence is that of Probable tyrosine phosphatase protein N1 (N3) from Microplitis demolitor bracovirus (isolate Webb) (MdBV).